We begin with the raw amino-acid sequence, 555 residues long: L-ascorbate oxidase homolog (555 aa).

An N-terminal signal peptide occupies residues 1–23; that stretch reads MRGVKLLAACLYLAAAATVVVHA. Plastocyanin-like domains are found at residues 25-145 and 158-301; these read DPYF…LRVN and EDDY…RYEG. 3 N-linked (GlcNAc...) asparagine glycosylation sites follow: asparagine 33, asparagine 61, and asparagine 110. Cysteine 103 and cysteine 539 are disulfide-bonded. Asparagine 330, asparagine 350, and asparagine 422 each carry an N-linked (GlcNAc...) asparagine glycan. The 180-residue stretch at 345 to 524 folds into the Plastocyanin-like 3 domain; the sequence is HYGKINITRT…LYASVLSPEK (180 aa).

This sequence belongs to the multicopper oxidase family. In terms of tissue distribution, maximal expression in early binucleate microspores; declines considerably in mature trinucleate pollen.

The protein resides in the secreted. In terms of biological role, probable oxidase that may be involved in pollen tube growth. The protein is L-ascorbate oxidase homolog (Bp10) of Brassica napus (Rape).